A 208-amino-acid polypeptide reads, in one-letter code: MKNIHCINHPLIEHKLGILRAKETKPFQFRMLIDEISSFLLFEASKDFSLKEIEISTPIQKTTVKKLDEKIMICPILRAALGMLESVFKMIPDASVGFLGFVRNEETLKADFYFQKLPKDAKKRTAIVIDPMFATGGTAIDACNFLKSQGVKKIKFISILAAPQGLKKFSQMHDDVEVFVACIDEGLNEKGYIIPGLGDAGDRVFNTL.

Residues Arg78, Arg103, and 130–138 each bind 5-phospho-alpha-D-ribose 1-diphosphate; that span reads DPMFATGGT. Uracil contacts are provided by residues Ile193 and 198 to 200; that span reads GDA. Asp199 is a binding site for 5-phospho-alpha-D-ribose 1-diphosphate.

The protein belongs to the UPRTase family. The cofactor is Mg(2+).

The catalysed reaction is UMP + diphosphate = 5-phospho-alpha-D-ribose 1-diphosphate + uracil. It functions in the pathway pyrimidine metabolism; UMP biosynthesis via salvage pathway; UMP from uracil: step 1/1. Its activity is regulated as follows. Allosterically activated by GTP. Its function is as follows. Catalyzes the conversion of uracil and 5-phospho-alpha-D-ribose 1-diphosphate (PRPP) to UMP and diphosphate. This is Uracil phosphoribosyltransferase from Campylobacter jejuni subsp. jejuni serotype O:2 (strain ATCC 700819 / NCTC 11168).